A 201-amino-acid chain; its full sequence is Dynactin subunit 6 (201 aa).

It belongs to the dynactin subunits 5/6 family. Dynactin subunit 6 subfamily. As to quaternary structure, member of the pointed-end complex of the dynactin shoulder complex which contains dctn4, dctn5 and dctn6 subunits and Actr10. Within the complex dctn6 forms a heterodimer with dctn5. Interacts with plk1.

The protein resides in the cytoplasm. It is found in the cytoskeleton. The protein localises to the chromosome. It localises to the centromere. Its subcellular location is the kinetochore. In terms of biological role, part of the dynactin complex that activates the molecular motor dynein for ultra-processive transport along microtubules. The polypeptide is Dynactin subunit 6 (dctn6) (Xenopus tropicalis (Western clawed frog)).